The primary structure comprises 189 residues: ATP synthase subunit b (189 aa).

Residues leucine 25–phenylalanine 45 traverse the membrane as a helical segment.

Belongs to the ATPase B chain family. As to quaternary structure, F-type ATPases have 2 components, F(1) - the catalytic core - and F(0) - the membrane proton channel. F(1) has five subunits: alpha(3), beta(3), gamma(1), delta(1), epsilon(1). F(0) has three main subunits: a(1), b(2) and c(10-14). The alpha and beta chains form an alternating ring which encloses part of the gamma chain. F(1) is attached to F(0) by a central stalk formed by the gamma and epsilon chains, while a peripheral stalk is formed by the delta and b chains.

The protein resides in the cell membrane. F(1)F(0) ATP synthase produces ATP from ADP in the presence of a proton or sodium gradient. F-type ATPases consist of two structural domains, F(1) containing the extramembraneous catalytic core and F(0) containing the membrane proton channel, linked together by a central stalk and a peripheral stalk. During catalysis, ATP synthesis in the catalytic domain of F(1) is coupled via a rotary mechanism of the central stalk subunits to proton translocation. Functionally, component of the F(0) channel, it forms part of the peripheral stalk, linking F(1) to F(0). The polypeptide is ATP synthase subunit b (Streptomyces griseus subsp. griseus (strain JCM 4626 / CBS 651.72 / NBRC 13350 / KCC S-0626 / ISP 5235)).